Consider the following 101-residue polypeptide: Small ribosomal subunit protein eS24 (101 aa).

This sequence belongs to the eukaryotic ribosomal protein eS24 family.

This Methanocaldococcus jannaschii (strain ATCC 43067 / DSM 2661 / JAL-1 / JCM 10045 / NBRC 100440) (Methanococcus jannaschii) protein is Small ribosomal subunit protein eS24.